Here is a 97-residue protein sequence, read N- to C-terminus: UPF0390 protein CNBD1430 (97 aa).

Disordered regions lie at residues 1-57 and 75-97; these read MAQG…INNS and RNVG…GKSR. Basic and acidic residues predominate over residues 29–46; the sequence is GKREVAPKDRQRVLERSQ. The span at 48–57 shows a compositional bias: polar residues; the sequence is KQLSSKINNS.

This sequence belongs to the UPF0390 family.

This is UPF0390 protein CNBD1430 from Cryptococcus neoformans var. neoformans serotype D (strain B-3501A) (Filobasidiella neoformans).